An 881-amino-acid polypeptide reads, in one-letter code: Alanine--tRNA ligase (881 aa).

Zn(2+)-binding residues include His-565, His-569, Cys-672, and His-676.

The protein belongs to the class-II aminoacyl-tRNA synthetase family. Requires Zn(2+) as cofactor.

Its subcellular location is the cytoplasm. The enzyme catalyses tRNA(Ala) + L-alanine + ATP = L-alanyl-tRNA(Ala) + AMP + diphosphate. In terms of biological role, catalyzes the attachment of alanine to tRNA(Ala) in a two-step reaction: alanine is first activated by ATP to form Ala-AMP and then transferred to the acceptor end of tRNA(Ala). Also edits incorrectly charged Ser-tRNA(Ala) and Gly-tRNA(Ala) via its editing domain. This Novosphingobium aromaticivorans (strain ATCC 700278 / DSM 12444 / CCUG 56034 / CIP 105152 / NBRC 16084 / F199) protein is Alanine--tRNA ligase.